The chain runs to 578 residues: CTP synthase 2 (578 aa).

Positions Lys-305–Glu-564 constitute a Glutamine amidotransferase type-1 domain. Catalysis depends on for GATase activity residues Cys-404, His-537, and Glu-539.

It belongs to the CTP synthase family. As to quaternary structure, homodimer. Oligomerizes to a tetramer in the presence of its substrates UTP and ATP. Requires Mg(2+) as cofactor.

The protein localises to the cytoplasm. The catalysed reaction is UTP + L-glutamine + ATP + H2O = CTP + L-glutamate + ADP + phosphate + 2 H(+). It functions in the pathway pyrimidine metabolism; CTP biosynthesis via de novo pathway; CTP from UDP: step 2/2. Activated by GTP. Subject to allosteric product inhibition by CTP. Inhibited by p-chloromercuriphenylsulfonic acid, N-ethylmaleimide and cyclopentenylcytosine (CPEC). Functionally, catalyzes the ATP-dependent amination of UTP to CTP with either L-glutamine or ammonia as the source of nitrogen. Plays an important role in the regulation of phospholipid synthesis. The sequence is that of CTP synthase 2 (URA8) from Saccharomyces cerevisiae (strain ATCC 204508 / S288c) (Baker's yeast).